The sequence spans 1416 residues: Uveal autoantigen with coiled-coil domains and ankyrin repeats (1416 aa).

M1 carries the N-acetylmethionine modification. A disordered region spans residues 1–24 (MKSLKSRLRRQDVPGPASSGAAAA). 6 ANK repeats span residues 38–66 (LMKA…KLDV), 67–96 (EGRS…DITT), 100–129 (AGRN…PTEH), 133–162 (QGRT…SVNA), 166–195 (DGRT…DVNS), and 199–228 (QNRT…DISL). Coiled-coil stretches lie at residues 286–374 (VKSH…NRFK) and 438–1386 (ENEI…IYRT). A Glycyl lysine isopeptide (Lys-Gly) (interchain with G-Cter in SUMO2) cross-link involves residue K1035.

In terms of assembly, component of the apoptosome complex, composed of APAF1, pro-caspase-9 and UACA. In the complex, it probably interacts directly with APAF1. Interacts with LGALS3, ARF6 and ACTB. Interacts with RAB39A. As to expression, highly expressed in skeletal muscle, heart, kidney and pancreas. Expressed in choroid, retina and epidermal melanocytes. Expressed in eye muscles and thyroid follicular cells.

Its subcellular location is the nucleus. It localises to the cytoplasm. The protein localises to the cytoskeleton. Its function is as follows. Regulates APAF1 expression and plays an important role in the regulation of stress-induced apoptosis. Promotes apoptosis by regulating three pathways, apoptosome up-regulation, LGALS3/galectin-3 down-regulation and NF-kappa-B inactivation. Regulates the redistribution of APAF1 into the nucleus after proapoptotic stress. Down-regulates the expression of LGALS3 by inhibiting NFKB1. Modulates isoactin dynamics to regulate the morphological alterations required for cell growth and motility. Interaction with ARF6 may modulate cell shape and motility after injury. May be involved in multiple neurite formation. This chain is Uveal autoantigen with coiled-coil domains and ankyrin repeats (UACA), found in Homo sapiens (Human).